Reading from the N-terminus, the 780-residue chain is Exocyst complex component 3-like protein (780 aa).

The protein belongs to the SEC6 family.

Its subcellular location is the cytoplasmic vesicle. It localises to the secretory vesicle. Functionally, as part of the exocyst, may play a role in regulated exocytosis. The sequence is that of Exocyst complex component 3-like protein (exoc3l1) from Danio rerio (Zebrafish).